The following is a 119-amino-acid chain: Beta-2-microglobulin (119 aa).

The signal sequence occupies residues 1 to 20 (MARFVVVALLALLSLSGLEA). The region spanning 25-114 (PKIQVYSRHP…VTFPTPKTVK (90 aa)) is the Ig-like C1-type domain. An intrachain disulfide couples cysteine 45 to cysteine 100.

Belongs to the beta-2-microglobulin family. In terms of assembly, heterodimer of an alpha chain and a beta chain. Beta-2-microglobulin is the beta-chain of major histocompatibility complex class I molecules.

It is found in the secreted. Component of the class I major histocompatibility complex (MHC). Involved in the presentation of peptide antigens to the immune system. This Alouatta seniculus (Red howler monkey) protein is Beta-2-microglobulin (B2M).